We begin with the raw amino-acid sequence, 195 residues long: Putative kinase protein 143R (195 aa).

8 to 16 contacts ATP; that stretch reads GIIGAGKST. The substrate site is built by E31, Y43, and Q54. E78 (proton acceptor) is an active-site residue. Substrate contacts are provided by R79 and E142.

The protein belongs to the DCK/DGK family.

The protein is Putative kinase protein 143R of Acheta domesticus (House cricket).